The following is a 695-amino-acid chain: Amphiphysin (695 aa).

2 coiled-coil regions span residues 10 to 83 (AKNV…SLHE) and 144 to 191 (DYDS…QEEL). Residues 24-240 (VLQKLGKADE…MTKLGDQHAD (217 aa)) enclose the BAR domain. Disordered stretches follow at residues 244 to 312 (TIQG…VTPT) and 486 to 617 (GAPG…EASQ). At serine 252 the chain carries Phosphoserine. At threonine 260 the chain carries Phosphothreonine. Residues 261–274 (PSPPEEPSPLPSPT) are compositionally biased toward pro residues. Residues serine 262, serine 268, serine 272, and serine 276 each carry the phosphoserine modification. Residue threonine 280 is modified to Phosphothreonine. Phosphoserine is present on residues serine 506 and serine 638. The 74-residue stretch at 622–695 (GFLYKVETLH…FPENFTRRLD (74 aa)) folds into the SH3 domain.

In terms of assembly, heterodimer with BIN1. Binds SH3GLB1. Interacts with REPS1 and SGIP1. Binds AP2A2. Interacts with AP2B1. Interacts with DNM1 and SYNJ1. As to expression, neurons, certain endocrine cell types and spermatocytes.

The protein resides in the cytoplasmic vesicle. It is found in the secretory vesicle. It localises to the synaptic vesicle membrane. Its subcellular location is the cytoplasm. The protein localises to the cytoskeleton. Its function is as follows. May participate in mechanisms of regulated exocytosis in synapses and certain endocrine cell types. May control the properties of the membrane associated cytoskeleton. The chain is Amphiphysin (AMPH) from Homo sapiens (Human).